The sequence spans 159 residues: NADH-quinone oxidoreductase subunit B (159 aa).

Cys-32, Cys-33, Cys-97, and Cys-126 together coordinate [4Fe-4S] cluster.

It belongs to the complex I 20 kDa subunit family. NDH-1 is composed of 14 different subunits. Subunits NuoB, C, D, E, F, and G constitute the peripheral sector of the complex. It depends on [4Fe-4S] cluster as a cofactor.

The protein resides in the cell inner membrane. The enzyme catalyses a quinone + NADH + 5 H(+)(in) = a quinol + NAD(+) + 4 H(+)(out). Functionally, NDH-1 shuttles electrons from NADH, via FMN and iron-sulfur (Fe-S) centers, to quinones in the respiratory chain. The immediate electron acceptor for the enzyme in this species is believed to be ubiquinone. Couples the redox reaction to proton translocation (for every two electrons transferred, four hydrogen ions are translocated across the cytoplasmic membrane), and thus conserves the redox energy in a proton gradient. The protein is NADH-quinone oxidoreductase subunit B of Helicobacter pylori (strain HPAG1).